We begin with the raw amino-acid sequence, 131 residues long: Profilin-2 (131 aa).

The protein belongs to the profilin family. As to quaternary structure, occurs in many kinds of cells as a complex with monomeric actin in a 1:1 ratio.

It localises to the cytoplasm. The protein localises to the cytoskeleton. Functionally, binds to actin and affects the structure of the cytoskeleton. At high concentrations, profilin prevents the polymerization of actin, whereas it enhances it at low concentrations. By binding to PIP2, it inhibits the formation of IP3 and DG. This is Profilin-2 from Lilium longiflorum (Trumpet lily).